The chain runs to 365 residues: Gibberellin 20 oxidase 1-B (365 aa).

Residues 199–299 (GNDSIMRLNY…RKSLAFFLCP (101 aa)) form the Fe2OG dioxygenase domain. Positions 224, 226, and 280 each coordinate Fe cation. The active site involves R290.

Belongs to the iron/ascorbate-dependent oxidoreductase family. GA20OX subfamily. Fe cation serves as cofactor. The cofactor is L-ascorbate. As to expression, not detected in nodes and the ear of the elongating stem.

It carries out the reaction gibberellin A12 + 2 2-oxoglutarate + 3 O2 + H(+) = gibberellin A9 + 2 succinate + 3 CO2 + 2 H2O. It catalyses the reaction gibberellin A53 + 2 2-oxoglutarate + 3 O2 + H(+) = gibberellin A20 + 2 succinate + 3 CO2 + 2 H2O. Functionally, key oxidase enzyme in the biosynthesis of gibberellin that catalyzes the conversion of GA12 and GA53 to GA9 and GA20 respectively, via a three-step oxidation at C-20 of the GA skeleton. The protein is Gibberellin 20 oxidase 1-B (GA20ox1B) of Triticum aestivum (Wheat).